The primary structure comprises 691 residues: NADH-ubiquinone oxidoreductase 75 kDa subunit (691 aa).

The 2Fe-2S ferredoxin-type domain occupies 1-78 (MVNVFVDGLS…NMKIFTNTPL (78 aa)). 4 residues coordinate [2Fe-2S] cluster: C34, C45, C48, and C62. A 4Fe-4S His(Cys)3-ligated-type domain is found at 78 to 117 (LVKKAREGVLEFLLVNHPLDCPICDQGGECDLQDLTMVYG). [4Fe-4S] cluster is bound by residues H94, C98, C101, C107, C146, C149, C152, and C196. The 57-residue stretch at 215–271 (LQSTESIDVSDAIGSNIRIDVRGSEIMRILPRLNEDVNEEWISDKARFCYDGLKRQR) folds into the 4Fe-4S Mo/W bis-MGD-type domain.

The protein belongs to the complex I 75 kDa subunit family. As to quaternary structure, complex I is composed of about 30 different subunits. [2Fe-2S] cluster serves as cofactor. Requires [4Fe-4S] cluster as cofactor.

The protein resides in the mitochondrion inner membrane. It carries out the reaction a ubiquinone + NADH + 5 H(+)(in) = a ubiquinol + NAD(+) + 4 H(+)(out). Its function is as follows. Core subunit of the mitochondrial membrane respiratory chain NADH dehydrogenase (Complex I) that is believed to belong to the minimal assembly required for catalysis. Complex I functions in the transfer of electrons from NADH to the respiratory chain. The immediate electron acceptor for the enzyme is believed to be ubiquinone. This is the largest subunit of complex I and it is a component of the iron-sulfur (IP) fragment of the enzyme. It may form part of the active site crevice where NADH is oxidized. This is NADH-ubiquinone oxidoreductase 75 kDa subunit (NAD11) from Reclinomonas americana.